Here is a 220-residue protein sequence, read N- to C-terminus: Deoxyribose-phosphate aldolase (220 aa).

Residue aspartate 89 is the Proton donor/acceptor of the active site. Residue lysine 151 is the Schiff-base intermediate with acetaldehyde of the active site. The Proton donor/acceptor role is filled by lysine 180.

It belongs to the DeoC/FbaB aldolase family. DeoC type 1 subfamily.

It localises to the cytoplasm. It catalyses the reaction 2-deoxy-D-ribose 5-phosphate = D-glyceraldehyde 3-phosphate + acetaldehyde. Its pathway is carbohydrate degradation; 2-deoxy-D-ribose 1-phosphate degradation; D-glyceraldehyde 3-phosphate and acetaldehyde from 2-deoxy-alpha-D-ribose 1-phosphate: step 2/2. Catalyzes a reversible aldol reaction between acetaldehyde and D-glyceraldehyde 3-phosphate to generate 2-deoxy-D-ribose 5-phosphate. The sequence is that of Deoxyribose-phosphate aldolase from Streptococcus mutans serotype c (strain ATCC 700610 / UA159).